Consider the following 308-residue polypeptide: Probable lipid phosphate phosphatase 4 (308 aa).

6 helical membrane passes run 26–46 (WLIL…EPFH), 66–86 (IPMW…FIVY), 93–113 (VYDL…TGVT), 162–182 (SFPS…AWYL), 193–213 (GHVA…LIGI), and 226–246 (VFAG…HFFP). The disordered stretch occupies residues 274 to 308 (MTRTGSRGMLGNDVEPGNSASSPHDRHRESTDSDF). Positions 296 to 308 (PHDRHRESTDSDF) are enriched in basic and acidic residues.

The protein belongs to the PA-phosphatase related phosphoesterase family.

It localises to the membrane. This chain is Probable lipid phosphate phosphatase 4 (LPP4), found in Arabidopsis thaliana (Mouse-ear cress).